We begin with the raw amino-acid sequence, 847 residues long: Lethal(3)malignant brain tumor-like protein 1 (847 aa).

Basic and acidic residues-rich tracts occupy residues 65–82 (FPRE…EKGV) and 144–155 (AVKEGHAKKDGD). 3 disordered regions span residues 65–87 (FPRE…SEPI), 142–163 (AEAV…PTSR), and 237–296 (VKKR…SEEK). MBT repeat units lie at residues 300–400 (WSWA…LQPP), 408–507 (FSWT…LTPP), and 516–611 (FIWE…LQPP). Residues 473–480 (FDNWDDTY) are interaction with monomethylated and dimethylated peptides. The CCHHC-type zinc-finger motif lies at 639–682 (SKYSFHHRKCPTPGCDGSGHVTGRFTAHYCLSGCPLAEKNQGKL). Positions 648, 653, 666, and 672 each coordinate Zn(2+). The 65-residue stretch at 778 to 842 (WTIDEVFSFV…YNAILMFKNA (65 aa)) folds into the SAM domain.

Homodimer.

It localises to the nucleus. Its function is as follows. Polycomb group (PcG) protein that specifically recognizes and binds mono- and dimethyllysine residues on target proteins, thereby acting as a 'reader' of a network of post-translational modifications. PcG proteins maintain the transcriptionally repressive state of genes: acts as a chromatin compaction factor by recognizing and binding mono- and dimethylated histone H1b/H1-4 at 'Lys-26' (H1bK26me1 and H1bK26me2) and histone H4 at 'Lys-20' (H4K20me1 and H4K20me2), leading to condense chromatin and repress transcription. This chain is Lethal(3)malignant brain tumor-like protein 1 (L3MBTL1), found in Gallus gallus (Chicken).